The chain runs to 169 residues: Endoribonuclease YbeY (169 aa).

Zn(2+)-binding residues include His117, His121, and His127.

It belongs to the endoribonuclease YbeY family. Zn(2+) serves as cofactor.

The protein resides in the cytoplasm. Single strand-specific metallo-endoribonuclease involved in late-stage 70S ribosome quality control and in maturation of the 3' terminus of the 16S rRNA. This chain is Endoribonuclease YbeY, found in Mesoplasma florum (strain ATCC 33453 / NBRC 100688 / NCTC 11704 / L1) (Acholeplasma florum).